A 375-amino-acid chain; its full sequence is Phospho-N-acetylmuramoyl-pentapeptide-transferase (375 aa).

Transmembrane regions (helical) follow at residues 2-22 (IGLL…TPLF), 55-75 (AVII…LAVL), 82-102 (PTAS…VGFV), 120-140 (GKII…LNFP), 158-178 (IPWL…FVIW), 198-218 (GLAT…SLFQ), 237-257 (PMDL…FLWW), 264-284 (IFMG…FAIF), 289-309 (ILVA…IIQV), and 345-365 (WLLS…DWLI).

It belongs to the glycosyltransferase 4 family. MraY subfamily. Mg(2+) serves as cofactor.

The protein localises to the cell membrane. The catalysed reaction is UDP-N-acetyl-alpha-D-muramoyl-L-alanyl-gamma-D-glutamyl-meso-2,6-diaminopimeloyl-D-alanyl-D-alanine + di-trans,octa-cis-undecaprenyl phosphate = di-trans,octa-cis-undecaprenyl diphospho-N-acetyl-alpha-D-muramoyl-L-alanyl-D-glutamyl-meso-2,6-diaminopimeloyl-D-alanyl-D-alanine + UMP. It functions in the pathway cell wall biogenesis; peptidoglycan biosynthesis. Functionally, catalyzes the initial step of the lipid cycle reactions in the biosynthesis of the cell wall peptidoglycan: transfers peptidoglycan precursor phospho-MurNAc-pentapeptide from UDP-MurNAc-pentapeptide onto the lipid carrier undecaprenyl phosphate, yielding undecaprenyl-pyrophosphoryl-MurNAc-pentapeptide, known as lipid I. The chain is Phospho-N-acetylmuramoyl-pentapeptide-transferase from Micrococcus luteus (strain ATCC 4698 / DSM 20030 / JCM 1464 / CCM 169 / CCUG 5858 / IAM 1056 / NBRC 3333 / NCIMB 9278 / NCTC 2665 / VKM Ac-2230) (Micrococcus lysodeikticus).